A 1357-amino-acid chain; its full sequence is DNA-directed RNA polymerase subunit beta (1357 aa).

The protein belongs to the RNA polymerase beta chain family. As to quaternary structure, the RNAP catalytic core consists of 2 alpha, 1 beta, 1 beta' and 1 omega subunit. When a sigma factor is associated with the core the holoenzyme is formed, which can initiate transcription.

The enzyme catalyses RNA(n) + a ribonucleoside 5'-triphosphate = RNA(n+1) + diphosphate. Functionally, DNA-dependent RNA polymerase catalyzes the transcription of DNA into RNA using the four ribonucleoside triphosphates as substrates. In Pseudomonas putida (strain ATCC 700007 / DSM 6899 / JCM 31910 / BCRC 17059 / LMG 24140 / F1), this protein is DNA-directed RNA polymerase subunit beta.